A 68-amino-acid polypeptide reads, in one-letter code: Large ribosomal subunit protein bL31 (68 aa).

Zn(2+) is bound by residues C16, C18, C36, and C39.

It belongs to the bacterial ribosomal protein bL31 family. Type A subfamily. In terms of assembly, part of the 50S ribosomal subunit. Zn(2+) serves as cofactor.

Binds the 23S rRNA. The sequence is that of Large ribosomal subunit protein bL31 from Dictyoglomus turgidum (strain DSM 6724 / Z-1310).